Here is a 359-residue protein sequence, read N- to C-terminus: MKKYLALALIAPLLISCSTTKKGDTYNEAWVKDTNGFDILMGQFAHNIENIWGFKEVVIAGPKDYVKYTDQYQTRSHINFDDGTITIETIAGTEPAAHLRRAIIKTLLMGDDPSSVDLYSDVDDITISKEPFLYGQVVDNTGQPIRWEGRASNFADYLLKNRLKSRSNGLRIIYSVTINMVPNHLDKRAHKYLGMVRQASRKYGVDESLILAIMQTESSFNPYAVSRSDALGLMQVVQHTAGKDVFRSQGKSGTPSRNFLFDPASNIDTGTAYLAMLNNVYLGGIDNPTSRRYAVITAYNGGAGSVLRVFSNDKIQAANIINTMTPGDVYQTLTTRHPSAESRRYLYKVNTAQKSYRRR.

Positions 1–16 (MKKYLALALIAPLLIS) are cleaved as a signal peptide. A lipid anchor (N-palmitoyl cysteine) is attached at cysteine 17. Residue cysteine 17 is the site of S-diacylglycerol cysteine attachment.

Belongs to the transglycosylase Slt family.

It is found in the cell outer membrane. It carries out the reaction Exolytic cleavage of the (1-&gt;4)-beta-glycosidic linkage between N-acetylmuramic acid (MurNAc) and N-acetylglucosamine (GlcNAc) residues in peptidoglycan, from either the reducing or the non-reducing ends of the peptidoglycan chains, with concomitant formation of a 1,6-anhydrobond in the MurNAc residue.. In terms of biological role, murein-degrading enzyme. May play a role in recycling of muropeptides during cell elongation and/or cell division. In Escherichia coli (strain SE11), this protein is Membrane-bound lytic murein transglycosylase C.